A 184-amino-acid polypeptide reads, in one-letter code: Sec-independent protein translocase protein TatB (184 aa).

The chain crosses the membrane as a helical span at residues 1–21 (MFDIGFSELVLLFVVGLIVLG). The segment covering 149-168 (AEEGEPMLEMGESDFSEDEQ) has biased composition (acidic residues). The interval 149 to 184 (AEEGEPMLEMGESDFSEDEQATASSNETIENIKEKV) is disordered.

It belongs to the TatB family. In terms of assembly, the Tat system comprises two distinct complexes: a TatABC complex, containing multiple copies of TatA, TatB and TatC subunits, and a separate TatA complex, containing only TatA subunits. Substrates initially bind to the TatABC complex, which probably triggers association of the separate TatA complex to form the active translocon.

Its subcellular location is the cell inner membrane. Functionally, part of the twin-arginine translocation (Tat) system that transports large folded proteins containing a characteristic twin-arginine motif in their signal peptide across membranes. Together with TatC, TatB is part of a receptor directly interacting with Tat signal peptides. TatB may form an oligomeric binding site that transiently accommodates folded Tat precursor proteins before their translocation. The polypeptide is Sec-independent protein translocase protein TatB (Histophilus somni (strain 129Pt) (Haemophilus somnus)).